A 179-amino-acid chain; its full sequence is Large ribosomal subunit protein uL6 (179 aa).

This sequence belongs to the universal ribosomal protein uL6 family. In terms of assembly, part of the 50S ribosomal subunit.

This protein binds to the 23S rRNA, and is important in its secondary structure. It is located near the subunit interface in the base of the L7/L12 stalk, and near the tRNA binding site of the peptidyltransferase center. The sequence is that of Large ribosomal subunit protein uL6 from Chlorobaculum tepidum (strain ATCC 49652 / DSM 12025 / NBRC 103806 / TLS) (Chlorobium tepidum).